The chain runs to 408 residues: MKYPNLLERFLTYVKVNTRSDETSTTTPSTQSQMDFANNILIPEMKRVGLENVYYLPNGFAIGTLPANDPSFTLKIGFISHMDTADFNAENVQPQVIENYDGGVIPLGQSGFNLDPADFASLHKYKGQTLITTDGTTLLGADDKSGIAEIMTAIEYLSAHPEIKHGEIRVGFGPDEEIGIGADKFDAENFDVDFAYTVDGGPLGELQYETFSAAGAELTFQGRNVHPGTAKDQMINALQLAIDFHNQLPEADRPEKTEGYQGFYHLMNLTGTVEEAQASYIIRDFETDAFENRKAAMQAIADKMNQELGRERVILTLKDQYYNMKQVIEKDMTPIHIAKAVMESLDIQPIIEPIRGGTDGSKISFMGIPTPNLFAGGENMHGRFEYVSLETMERAVDTIIGIVSYQEK.

A Zn(2+)-binding site is contributed by His-81. Asp-83 is a catalytic residue. Asp-142 contacts Zn(2+). The active-site Proton acceptor is the Glu-176. 3 residues coordinate Zn(2+): Glu-177, Asp-199, and His-381.

This sequence belongs to the peptidase M20B family. Requires Zn(2+) as cofactor.

The protein resides in the cytoplasm. It catalyses the reaction Release of the N-terminal residue from a tripeptide.. In terms of biological role, cleaves the N-terminal amino acid of tripeptides. In Streptococcus gordonii (strain Challis / ATCC 35105 / BCRC 15272 / CH1 / DL1 / V288), this protein is Peptidase T.